The following is a 392-amino-acid chain: Alaserpin (392 aa).

A signal peptide spans 1–16 (MKIIMCIFGLAALAMA). Asn-85 carries an N-linked (GlcNAc...) asparagine glycan.

It belongs to the serpin family. As to expression, hemolymph.

The protein localises to the secreted. It localises to the extracellular space. Functionally, inhibits elastase. The chain is Alaserpin from Manduca sexta (Tobacco hawkmoth).